A 150-amino-acid chain; its full sequence is MSNLEFVYKYFNSLDVKELYDIYLLRTNVFVVEQKCAYPEVDEIDLKCGHLMLRNANGKLVAYARLIPEQQQTVRIGRVVVDPDERKNGYGRKLMLQALETSKQEFSSSKTFVLSSQEYAQPLYRSVGFKKCSDAYLEDGIPHVEMRLEL.

The N-acetyltransferase domain occupies 9–150; it reads KYFNSLDVKE…IPHVEMRLEL (142 aa).

The protein belongs to the UPF0039 (ElaA) family.

The sequence is that of UPF0039 protein C11D3.02c from Schizosaccharomyces pombe (strain 972 / ATCC 24843) (Fission yeast).